The sequence spans 415 residues: tRNA(Ile)-lysidine synthase (415 aa).

An ATP-binding site is contributed by 36-41 (SGGRDS).

Belongs to the tRNA(Ile)-lysidine synthase family.

Its subcellular location is the cytoplasm. The catalysed reaction is cytidine(34) in tRNA(Ile2) + L-lysine + ATP = lysidine(34) in tRNA(Ile2) + AMP + diphosphate + H(+). Ligates lysine onto the cytidine present at position 34 of the AUA codon-specific tRNA(Ile) that contains the anticodon CAU, in an ATP-dependent manner. Cytidine is converted to lysidine, thus changing the amino acid specificity of the tRNA from methionine to isoleucine. The sequence is that of tRNA(Ile)-lysidine synthase from Tropheryma whipplei (strain Twist) (Whipple's bacillus).